Reading from the N-terminus, the 355-residue chain is NADH-quinone oxidoreductase subunit H (355 aa).

Transmembrane regions (helical) follow at residues 25-45 (IVRI…LILW), 91-111 (WLYL…WAVI), 126-146 (LLYA…AGWA), 170-190 (MGFA…SEIV), 205-225 (FLSW…ISGI), 252-272 (GMAF…ISAL), 290-310 (FIPG…VFIW), and 330-350 (VFLP…MSPL).

The protein belongs to the complex I subunit 1 family. As to quaternary structure, NDH-1 is composed of 14 different subunits. Subunits NuoA, H, J, K, L, M, N constitute the membrane sector of the complex.

Its subcellular location is the cell inner membrane. It carries out the reaction a quinone + NADH + 5 H(+)(in) = a quinol + NAD(+) + 4 H(+)(out). In terms of biological role, NDH-1 shuttles electrons from NADH, via FMN and iron-sulfur (Fe-S) centers, to quinones in the respiratory chain. The immediate electron acceptor for the enzyme in this species is believed to be ubiquinone. Couples the redox reaction to proton translocation (for every two electrons transferred, four hydrogen ions are translocated across the cytoplasmic membrane), and thus conserves the redox energy in a proton gradient. This subunit may bind ubiquinone. This Burkholderia lata (strain ATCC 17760 / DSM 23089 / LMG 22485 / NCIMB 9086 / R18194 / 383) protein is NADH-quinone oxidoreductase subunit H.